We begin with the raw amino-acid sequence, 422 residues long: L-threonine dehydratase biosynthetic IlvA (422 aa).

The residue at position 56 (Lys56) is an N6-(pyridoxal phosphate)lysine. Pyridoxal 5'-phosphate contacts are provided by residues Asn83, Gly189–Leu193, and Ser315. The ACT-like domain occupies His339–Glu413.

This sequence belongs to the serine/threonine dehydratase family. In terms of assembly, homotetramer. Pyridoxal 5'-phosphate is required as a cofactor.

The enzyme catalyses L-threonine = 2-oxobutanoate + NH4(+). It functions in the pathway amino-acid biosynthesis; L-isoleucine biosynthesis; 2-oxobutanoate from L-threonine: step 1/1. Its function is as follows. Catalyzes the anaerobic formation of alpha-ketobutyrate and ammonia from threonine in a two-step reaction. The first step involved a dehydration of threonine and a production of enamine intermediates (aminocrotonate), which tautomerizes to its imine form (iminobutyrate). Both intermediates are unstable and short-lived. The second step is the nonenzymatic hydrolysis of the enamine/imine intermediates to form 2-ketobutyrate and free ammonia. In the low water environment of the cell, the second step is accelerated by RidA. This Staphylococcus aureus (strain MSSA476) protein is L-threonine dehydratase biosynthetic IlvA (ilvA).